Consider the following 1199-residue polypeptide: DNA-directed RNA polymerase subunit beta' (1199 aa).

Residues Cys60, Cys62, Cys75, and Cys78 each contribute to the Zn(2+) site. Residues Asp449, Asp451, and Asp453 each coordinate Mg(2+). Residues Cys818, Cys892, Cys899, and Cys902 each coordinate Zn(2+).

It belongs to the RNA polymerase beta' chain family. As to quaternary structure, the RNAP catalytic core consists of 2 alpha, 1 beta, 1 beta' and 1 omega subunit. When a sigma factor is associated with the core the holoenzyme is formed, which can initiate transcription. The cofactor is Mg(2+). Zn(2+) is required as a cofactor.

It carries out the reaction RNA(n) + a ribonucleoside 5'-triphosphate = RNA(n+1) + diphosphate. DNA-dependent RNA polymerase catalyzes the transcription of DNA into RNA using the four ribonucleoside triphosphates as substrates. In Bacillus velezensis (strain DSM 23117 / BGSC 10A6 / LMG 26770 / FZB42) (Bacillus amyloliquefaciens subsp. plantarum), this protein is DNA-directed RNA polymerase subunit beta'.